Reading from the N-terminus, the 440-residue chain is Trigger factor (440 aa).

One can recognise a PPIase FKBP-type domain in the interval 163 to 248 (GDILTVDFLG…AKALKRRVAP (86 aa)).

This sequence belongs to the FKBP-type PPIase family. Tig subfamily.

It is found in the cytoplasm. It catalyses the reaction [protein]-peptidylproline (omega=180) = [protein]-peptidylproline (omega=0). Functionally, involved in protein export. Acts as a chaperone by maintaining the newly synthesized protein in an open conformation. Functions as a peptidyl-prolyl cis-trans isomerase. This Acidiphilium cryptum (strain JF-5) protein is Trigger factor.